A 299-amino-acid chain; its full sequence is MKPDAHHVKQFLLRLQDDICQTLSAVDGANFVEDSWRREAGGGGRSRVLRNGGIFEQAGVNFSHVHGDAMPASATAHRPELAGRSFEAMGVSLVVHPHNPYIPTSHANVRFFIAEKPGADPVWWFGGGFDLTPYYGFEEDAVHWHRTARDLCQPFGDDVYPRYKKWCDDYFFLKHRNEQRGIGGLFFDDLNTPDFDHCFDFMQAVGNGYTRAYLPIVERRKAMVWGERERNFQLYRRGRYVEFNLVWDRGTLFGLQTGGRTESILMSMPPLVRWEYDWQPEAGSPEAALSEFIQVRDWI.

Residue serine 92 participates in substrate binding. 2 residues coordinate a divalent metal cation: histidine 96 and histidine 106. Histidine 106 acts as the Proton donor in catalysis. 108–110 is a substrate binding site; that stretch reads NVR. A divalent metal cation-binding residues include histidine 145 and histidine 175. The important for dimerization stretch occupies residues 240–275; sequence YVEFNLVWDRGTLFGLQTGGRTESILMSMPPLVRWE. 258–260 is a substrate binding site; sequence GGR.

It belongs to the aerobic coproporphyrinogen-III oxidase family. In terms of assembly, homodimer. It depends on a divalent metal cation as a cofactor.

The protein resides in the cytoplasm. The enzyme catalyses coproporphyrinogen III + O2 + 2 H(+) = protoporphyrinogen IX + 2 CO2 + 2 H2O. It functions in the pathway porphyrin-containing compound metabolism; protoporphyrin-IX biosynthesis; protoporphyrinogen-IX from coproporphyrinogen-III (O2 route): step 1/1. Functionally, involved in the heme biosynthesis. Catalyzes the aerobic oxidative decarboxylation of propionate groups of rings A and B of coproporphyrinogen-III to yield the vinyl groups in protoporphyrinogen-IX. The chain is Oxygen-dependent coproporphyrinogen-III oxidase from Salmonella paratyphi B (strain ATCC BAA-1250 / SPB7).